The chain runs to 385 residues: MKNILIGIVAGEASGDFLGAELIKSLNIIHSNIKFVGIAGPLMLKEKNVESWFSIEELSIMGIFEIINRIPKILNIRNKIFNRLSFLKPDLFIGIDSPEFNIHLEFKLKKNGIKIIHYVSPSIWAWRKSRIFKIKESVDKVLALLPFEKKIYDDFNIPCKFVGHPLADKIPLYPDKYSIRSNLEIDKNSVCLALLPGSRLTEINLLSKKFLYAAKIIKKNIFNLKILVPMVNSLLKKRFEEIKREVAPDLPITIFDNFSYEVMACSDFSIVTSGTATLECMLSKCPMVVGYCMKKINFFLLKKIIKINYISLPNLIAGKKIVPEKIQNECNPEVLAKEILIIFNDKKKYKKTKKIFYKLHKKIRCNSSYNAACSASCLINKLTIK.

It belongs to the LpxB family.

It carries out the reaction 2-N,3-O-bis[(3R)-3-hydroxytetradecanoyl]-alpha-D-glucosaminyl 1-phosphate + UDP-2-N,3-O-bis[(3R)-3-hydroxytetradecanoyl]-alpha-D-glucosamine = lipid A disaccharide (E. coli) + UDP + H(+). It catalyses the reaction a lipid X + a UDP-2-N,3-O-bis[(3R)-3-hydroxyacyl]-alpha-D-glucosamine = a lipid A disaccharide + UDP + H(+). It participates in glycolipid biosynthesis; lipid IV(A) biosynthesis; lipid IV(A) from (3R)-3-hydroxytetradecanoyl-[acyl-carrier-protein] and UDP-N-acetyl-alpha-D-glucosamine: step 5/6. Its function is as follows. Condensation of UDP-2,3-diacylglucosamine and 2,3-diacylglucosamine-1-phosphate to form lipid A disaccharide, a precursor of lipid A, a phosphorylated glycolipid that anchors the lipopolysaccharide to the outer membrane of the cell. The sequence is that of Lipid-A-disaccharide synthase from Wigglesworthia glossinidia brevipalpis.